We begin with the raw amino-acid sequence, 710 residues long: Polyribonucleotide nucleotidyltransferase (710 aa).

Mg(2+)-binding residues include aspartate 489 and aspartate 495. Positions 556–615 constitute a KH domain; sequence PKIDTIKIDVDKIKVVIGKGGETIDKIIAETGVKIDIDDEGNVSIYSSDQAAIDRTKEII. In terms of domain architecture, S1 motif spans 625–693; the sequence is GEVYHAKVIR…EKGRVDASMK (69 aa). Residues 691-710 form a disordered region; that stretch reads SMKALIPRPPKPEKKEEKHD. Residues 700–710 are compositionally biased toward basic and acidic residues; the sequence is PKPEKKEEKHD.

The protein belongs to the polyribonucleotide nucleotidyltransferase family. The cofactor is Mg(2+).

The protein resides in the cytoplasm. The enzyme catalyses RNA(n+1) + phosphate = RNA(n) + a ribonucleoside 5'-diphosphate. Involved in mRNA degradation. Catalyzes the phosphorolysis of single-stranded polyribonucleotides processively in the 3'- to 5'-direction. The sequence is that of Polyribonucleotide nucleotidyltransferase from Streptococcus pyogenes serotype M18 (strain MGAS8232).